The following is a 243-amino-acid chain: Calcium-binding protein LPS1-beta (243 aa).

7 consecutive EF-hand domains span residues 15–49 (EVIDAMKQEFKDNYDTNKDGTVSCAELAKLMDCPE), 47–82 (CPEEEAQRIITGVDVNCDGRMQFDEFLLYMEGYTKE), 85–120 (YSSDEIKQMFDDLDKDGNGRISPDELSKGVGEISTK), 121–156 (LVEGMANKLIQEADKDGDGHVNMEEFVDTLVAKLPL), 157–189 (CFKKCFHEDFDKNGDGSLTNAEMSQLLNRNLPG), 191–226 (YSEELINEMISRVDLNGDGRVQFGEFLMHAQNLSKD), and 227–243 (DIKNQFMAIDKDKNGKI). Ca(2+) contacts are provided by aspartate 29, asparagine 31, aspartate 33, threonine 35, glutamate 40, aspartate 60, asparagine 62, aspartate 64, arginine 66, glutamate 71, aspartate 98, aspartate 100, asparagine 102, arginine 104, glutamate 109, aspartate 134, aspartate 136, aspartate 138, histidine 140, glutamate 145, aspartate 167, asparagine 169, aspartate 171, serine 173, glutamate 178, aspartate 204, asparagine 206, aspartate 208, arginine 210, and glutamate 215.

As to expression, aboral ectoderm, a squamous epithelium covering the surface of the late stage embryo and larva.

Its function is as follows. Calcium-binding protein involved in larval development and metamorphosis. Likely to function as calcium buffers mediating the transport of calcium from the sea water to the blastocoel where calcium is required for skeleton formation. The sequence is that of Calcium-binding protein LPS1-beta from Lytechinus pictus (Painted sea urchin).